A 688-amino-acid chain; its full sequence is Glycine--tRNA ligase beta subunit (688 aa).

This sequence belongs to the class-II aminoacyl-tRNA synthetase family. As to quaternary structure, tetramer of two alpha and two beta subunits.

It is found in the cytoplasm. It carries out the reaction tRNA(Gly) + glycine + ATP = glycyl-tRNA(Gly) + AMP + diphosphate. The protein is Glycine--tRNA ligase beta subunit of Syntrophomonas wolfei subsp. wolfei (strain DSM 2245B / Goettingen).